The sequence spans 276 residues: ATP synthase subunit delta (276 aa).

Belongs to the ATPase delta chain family. F-type ATPases have 2 components, F(1) - the catalytic core - and F(0) - the membrane proton channel. F(1) has five subunits: alpha(3), beta(3), gamma(1), delta(1), epsilon(1). F(0) has three main subunits: a(1), b(2) and c(10-14). The alpha and beta chains form an alternating ring which encloses part of the gamma chain. F(1) is attached to F(0) by a central stalk formed by the gamma and epsilon chains, while a peripheral stalk is formed by the delta and b chains.

Its subcellular location is the cell membrane. Its function is as follows. F(1)F(0) ATP synthase produces ATP from ADP in the presence of a proton or sodium gradient. F-type ATPases consist of two structural domains, F(1) containing the extramembraneous catalytic core and F(0) containing the membrane proton channel, linked together by a central stalk and a peripheral stalk. During catalysis, ATP synthesis in the catalytic domain of F(1) is coupled via a rotary mechanism of the central stalk subunits to proton translocation. This protein is part of the stalk that links CF(0) to CF(1). It either transmits conformational changes from CF(0) to CF(1) or is implicated in proton conduction. The protein is ATP synthase subunit delta of Kineococcus radiotolerans (strain ATCC BAA-149 / DSM 14245 / SRS30216).